We begin with the raw amino-acid sequence, 342 residues long: Transmembrane protein 268 (342 aa).

Helical transmembrane passes span 106–126 and 133–153; these read AFAV…SQMF and AGVL…VLVF. The segment at 245 to 267 is disordered; sequence VEGPEDLEDAPLLPSTPGPQERP.

Interacts with ITGAM; this interaction inhibits ITGAM degradation via the endosome-lysosome pathway. Interacts with ITGB4; this interaction prevents ITGB4 degradation.

Its subcellular location is the cell membrane. Stabilizes cell surface expression of ITGAM and participates in the adhesion and migration of phagocytes during bacterial clearance. In Mus musculus (Mouse), this protein is Transmembrane protein 268.